The following is a 271-amino-acid chain: Transmembrane protein 150A (271 aa).

The Cytoplasmic portion of the chain corresponds to 1–2 (MT). The helical transmembrane segment at 3 to 23 (AWILLPVSLSAFSITGIWTVY) threads the bilayer. Over 24–75 (AMAVMNRHVCPVENWSYNESCSPDPAEQGGPKSCCTLDDVPLISKCGTYPPE) the chain is Extracellular. Residues Asn37 and Asn41 are each glycosylated (N-linked (GlcNAc...) asparagine). Residues 76 to 96 (SCLFSLIGNMGAVMVALICLL) form a helical membrane-spanning segment. Over 97–108 (RYGQLLEQSRHS) the chain is Cytoplasmic. Residues 109–129 (WINTTALITGCTNAAGLVVVG) traverse the membrane as a helical segment. Topologically, residues 130 to 140 (NFQVDHAKSLH) are extracellular. A helical membrane pass occupies residues 141–161 (YIGTGVAFTAGLLFVCLHCVL). The Cytoplasmic segment spans residues 162–178 (FYHGATTPLDMAMAYLR). The helical transmembrane segment at 179–199 (SVLAVIAFITLVLSGVFFLHE) threads the bilayer. The Extracellular portion of the chain corresponds to 200–211 (SSQLQHGAALCE). A helical membrane pass occupies residues 212–232 (WVFVLDILIFYGTFSYEFGTI). Topologically, residues 233 to 271 (SSDTLVAALQPAPGRACKSSGSSSTSTHLNCAPESIAMI) are cytoplasmic.

It belongs to the DRAM/TMEM150 family. As to quaternary structure, interacts (via C-terminal cytoplasmic tail) with PI4KA.

The protein localises to the cell membrane. Regulates localization of phosphatidylinositol 4-kinase (PI4K) to the plasma membrane, possibly by reducing the association of TTC7 (TTC7A or TTC7B) with the PI4K complex. Acts as a regulator of phosphatidylinositol 4-phosphate (PtdIns(4)P) synthesis. May also play a role in fasting-induced catabolism. This chain is Transmembrane protein 150A (Tmem150a), found in Mus musculus (Mouse).